Here is an 813-residue protein sequence, read N- to C-terminus: Leucine--tRNA ligase (813 aa).

The 'HIGH' region signature appears at 42 to 52 (PYTSGNLHIGH). Positions 580–584 (KMSKS) match the 'KMSKS' region motif. Lys-583 lines the ATP pocket.

The protein belongs to the class-I aminoacyl-tRNA synthetase family.

The protein localises to the cytoplasm. It carries out the reaction tRNA(Leu) + L-leucine + ATP = L-leucyl-tRNA(Leu) + AMP + diphosphate. This Dehalococcoides mccartyi (strain CBDB1) protein is Leucine--tRNA ligase.